A 374-amino-acid polypeptide reads, in one-letter code: Nucleosome assembly protein 1;1 (374 aa).

Residues 26–80 (VNALKNKLQDITGKPTNVLECLSPNVRKRVEVLKEIQSQHDELEAKFYEERAVLE) adopt a coiled-coil conformation. The Nuclear export signal motif lies at 47–62 (LSPNVRKRVEVLKEIQ). A Nuclear localization signal motif is present at residues 223 to 228 (KKKPKK). Acidic residues predominate over residues 299–339 (AAEDDFADLEDDDDDDEEDDDDEDEEEEDDEDDEDEEDEDD). Positions 299 to 374 (AAEDDFADLE…GERPPECKQQ (76 aa)) are disordered. Residues 343–355 (KKKSSAVRKRGVR) are compositionally biased toward basic residues. Cysteine 371 carries the post-translational modification Cysteine methyl ester. Cysteine 371 is lipidated: S-farnesyl cysteine. A propeptide spans 372–374 (KQQ) (removed in mature form).

The protein belongs to the nucleosome assembly protein (NAP) family. Binds preferentially histones H4 and H1 in vitro. Interacts with CYCB1;1.

Its subcellular location is the nucleus. It is found in the cytoplasm. May modulate chromatin structure by regulation of nucleosome assembly/disassembly. Could function together with B-type cyclins in the regulation of microtubule dynamics. The sequence is that of Nucleosome assembly protein 1;1 (NAP1;1) from Nicotiana tabacum (Common tobacco).